The primary structure comprises 572 residues: Proline--tRNA ligase (572 aa).

Belongs to the class-II aminoacyl-tRNA synthetase family. ProS type 1 subfamily. As to quaternary structure, homodimer.

It localises to the cytoplasm. The catalysed reaction is tRNA(Pro) + L-proline + ATP = L-prolyl-tRNA(Pro) + AMP + diphosphate. Catalyzes the attachment of proline to tRNA(Pro) in a two-step reaction: proline is first activated by ATP to form Pro-AMP and then transferred to the acceptor end of tRNA(Pro). As ProRS can inadvertently accommodate and process non-cognate amino acids such as alanine and cysteine, to avoid such errors it has two additional distinct editing activities against alanine. One activity is designated as 'pretransfer' editing and involves the tRNA(Pro)-independent hydrolysis of activated Ala-AMP. The other activity is designated 'posttransfer' editing and involves deacylation of mischarged Ala-tRNA(Pro). The misacylated Cys-tRNA(Pro) is not edited by ProRS. The protein is Proline--tRNA ligase of Cronobacter sakazakii (strain ATCC BAA-894) (Enterobacter sakazakii).